Here is a 420-residue protein sequence, read N- to C-terminus: Glucose-1-phosphate adenylyltransferase (420 aa).

Alpha-D-glucose 1-phosphate is bound by residues tyrosine 107, glycine 172, 187-188 (EK), and serine 205.

The protein belongs to the bacterial/plant glucose-1-phosphate adenylyltransferase family. As to quaternary structure, homotetramer.

The catalysed reaction is alpha-D-glucose 1-phosphate + ATP + H(+) = ADP-alpha-D-glucose + diphosphate. Its pathway is glycan biosynthesis; glycogen biosynthesis. Its function is as follows. Involved in the biosynthesis of ADP-glucose, a building block required for the elongation reactions to produce glycogen. Catalyzes the reaction between ATP and alpha-D-glucose 1-phosphate (G1P) to produce pyrophosphate and ADP-Glc. In Rhizobium meliloti (strain 1021) (Ensifer meliloti), this protein is Glucose-1-phosphate adenylyltransferase.